Here is a 200-residue protein sequence, read N- to C-terminus: dITP/XTP pyrophosphatase (200 aa).

7–12 lines the substrate pocket; it reads TSNKHK. 2 residues coordinate Mg(2+): E38 and D73. D73 (proton acceptor) is an active-site residue. Substrate-binding positions include S74, 154-157, K177, and 182-183; these read FGYD and HR.

It belongs to the HAM1 NTPase family. In terms of assembly, homodimer. Mg(2+) serves as cofactor.

It catalyses the reaction XTP + H2O = XMP + diphosphate + H(+). It carries out the reaction dITP + H2O = dIMP + diphosphate + H(+). The catalysed reaction is ITP + H2O = IMP + diphosphate + H(+). Pyrophosphatase that catalyzes the hydrolysis of nucleoside triphosphates to their monophosphate derivatives, with a high preference for the non-canonical purine nucleotides XTP (xanthosine triphosphate), dITP (deoxyinosine triphosphate) and ITP. Seems to function as a house-cleaning enzyme that removes non-canonical purine nucleotides from the nucleotide pool, thus preventing their incorporation into DNA/RNA and avoiding chromosomal lesions. The protein is dITP/XTP pyrophosphatase of Campylobacter jejuni subsp. doylei (strain ATCC BAA-1458 / RM4099 / 269.97).